The chain runs to 312 residues: Epoxyqueuosine reductase (312 aa).

The Proton donor role is filled by Asp-132. Residues 174 to 206 form the 4Fe-4S ferredoxin-type 1 domain; it reads EVLEADKPSKPICGECEKCIEACPTKAIEEPFI. [4Fe-4S] cluster contacts are provided by Cys-186, Cys-189, Cys-192, Cys-196, Cys-212, Cys-240, Cys-243, and Cys-247. The 4Fe-4S ferredoxin-type 2 domain occupies 226 to 257; it reads PENIINKMGNWIAGCDICQDVCPWNQKHIPST.

The protein belongs to the QueG family. As to quaternary structure, monomer. Cob(II)alamin serves as cofactor. It depends on [4Fe-4S] cluster as a cofactor.

The protein resides in the cytoplasm. It catalyses the reaction epoxyqueuosine(34) in tRNA + AH2 = queuosine(34) in tRNA + A + H2O. It functions in the pathway tRNA modification; tRNA-queuosine biosynthesis. In terms of biological role, catalyzes the conversion of epoxyqueuosine (oQ) to queuosine (Q), which is a hypermodified base found in the wobble positions of tRNA(Asp), tRNA(Asn), tRNA(His) and tRNA(Tyr). The chain is Epoxyqueuosine reductase from Prochlorococcus marinus (strain NATL2A).